A 212-amino-acid polypeptide reads, in one-letter code: ATP-dependent Clp protease proteolytic subunit (212 aa).

The active-site Nucleophile is Ser109. The active site involves His134.

Belongs to the peptidase S14 family. Fourteen ClpP subunits assemble into 2 heptameric rings which stack back to back to give a disk-like structure with a central cavity, resembling the structure of eukaryotic proteasomes.

Its subcellular location is the cytoplasm. The catalysed reaction is Hydrolysis of proteins to small peptides in the presence of ATP and magnesium. alpha-casein is the usual test substrate. In the absence of ATP, only oligopeptides shorter than five residues are hydrolyzed (such as succinyl-Leu-Tyr-|-NHMec, and Leu-Tyr-Leu-|-Tyr-Trp, in which cleavage of the -Tyr-|-Leu- and -Tyr-|-Trp bonds also occurs).. In terms of biological role, cleaves peptides in various proteins in a process that requires ATP hydrolysis. Has a chymotrypsin-like activity. Plays a major role in the degradation of misfolded proteins. The polypeptide is ATP-dependent Clp protease proteolytic subunit (Bdellovibrio bacteriovorus (strain ATCC 15356 / DSM 50701 / NCIMB 9529 / HD100)).